The chain runs to 461 residues: Ribulose bisphosphate carboxylase (461 aa).

Substrate is bound at residue asparagine 112. The active-site Proton acceptor is the lysine 167. Lysine 169 provides a ligand contact to substrate. Mg(2+) is bound by residues lysine 192, aspartate 194, and glutamate 195. Position 192 is an N6-carboxylysine (lysine 192). Histidine 288 acts as the Proton acceptor in catalysis. Substrate-binding residues include arginine 289, histidine 322, and serine 369.

The protein belongs to the RuBisCO large chain family. Type II subfamily. In terms of assembly, homodimer. Mg(2+) is required as a cofactor.

The enzyme catalyses 2 (2R)-3-phosphoglycerate + 2 H(+) = D-ribulose 1,5-bisphosphate + CO2 + H2O. The catalysed reaction is D-ribulose 1,5-bisphosphate + O2 = 2-phosphoglycolate + (2R)-3-phosphoglycerate + 2 H(+). In terms of biological role, ruBisCO catalyzes two reactions: the carboxylation of D-ribulose 1,5-bisphosphate, the primary event in carbon dioxide fixation, as well as the oxidative fragmentation of the pentose substrate. Both reactions occur simultaneously and in competition at the same active site. The sequence is that of Ribulose bisphosphate carboxylase from Rhodopseudomonas palustris (strain HaA2).